We begin with the raw amino-acid sequence, 88 residues long: UPF0297 protein Ccel_2240 (88 aa).

It belongs to the UPF0297 family.

The polypeptide is UPF0297 protein Ccel_2240 (Ruminiclostridium cellulolyticum (strain ATCC 35319 / DSM 5812 / JCM 6584 / H10) (Clostridium cellulolyticum)).